Here is a 209-residue protein sequence, read N- to C-terminus: Chalcone isomerase-like protein 2 (209 aa).

This sequence belongs to the chalcone isomerase family. In terms of assembly, component an active demethylxanthohumol (DMX) biosynthetic metabolon in glandular trichomes (lupulin glands) that encompasses a chalcone synthase (CHS) and a membrane-bound prenyltransferase. Interacts with CHS_H1 and PT1L. As to expression, mostly expressed in glandular trichomes (lupulin glands), and, to a lower extent, in cones, cones bracts, leaves, stems and roots.

The protein resides in the cytoplasm. It carries out the reaction a chalcone = a flavanone.. The protein operates within secondary metabolite biosynthesis; flavonoid biosynthesis. Involved in the biosynthesis of prenylated phenolics natural products which contribute to the bitter taste of beer and display broad biological activities. Involved in anthocyanin biosynthesis. Polyketide binding proteins (PBP) which promotes the catalytic activities of CHS_H1 and PT1L and triggers demethylxanthohumol (DMX) production. The chain is Chalcone isomerase-like protein 2 from Humulus lupulus (European hop).